Reading from the N-terminus, the 186-residue chain is Putative manganese efflux pump MntP (186 aa).

Helical transmembrane passes span 5 to 25 (VLIGEILTLSMMAFALGMDAF), 41 to 61 (VFQIGVIIGLFHVIMPLGGMI), 72 to 92 (ALAGYIGGALLLVLGIQMIVA), 107 to 127 (FGLFVFAVGVSLDSFSVGLSL), 135 to 155 (ILTIFLFGLFSMVLTWAGLLL), and 166 to 186 (YSEALGGAILLSFGLKLLLPI).

It belongs to the MntP (TC 9.B.29) family.

It is found in the cell membrane. Its function is as follows. Probably functions as a manganese efflux pump. This chain is Putative manganese efflux pump MntP, found in Bacillus licheniformis (strain ATCC 14580 / DSM 13 / JCM 2505 / CCUG 7422 / NBRC 12200 / NCIMB 9375 / NCTC 10341 / NRRL NRS-1264 / Gibson 46).